A 216-amino-acid polypeptide reads, in one-letter code: Leucyl/phenylalanyl-tRNA--protein transferase (216 aa).

It belongs to the L/F-transferase family.

It localises to the cytoplasm. It catalyses the reaction N-terminal L-lysyl-[protein] + L-leucyl-tRNA(Leu) = N-terminal L-leucyl-L-lysyl-[protein] + tRNA(Leu) + H(+). The catalysed reaction is N-terminal L-arginyl-[protein] + L-leucyl-tRNA(Leu) = N-terminal L-leucyl-L-arginyl-[protein] + tRNA(Leu) + H(+). The enzyme catalyses L-phenylalanyl-tRNA(Phe) + an N-terminal L-alpha-aminoacyl-[protein] = an N-terminal L-phenylalanyl-L-alpha-aminoacyl-[protein] + tRNA(Phe). Functionally, functions in the N-end rule pathway of protein degradation where it conjugates Leu, Phe and, less efficiently, Met from aminoacyl-tRNAs to the N-termini of proteins containing an N-terminal arginine or lysine. This Maricaulis maris (strain MCS10) (Caulobacter maris) protein is Leucyl/phenylalanyl-tRNA--protein transferase.